A 417-amino-acid polypeptide reads, in one-letter code: Serine protease hepsin (417 aa).

Topologically, residues 1 to 23 (MAQKEGGRTVPCCSRPKVAALTA) are cytoplasmic. A helical; Signal-anchor for type II membrane protein transmembrane segment spans residues 24-44 (GTLLLLTAIGAASWAIVAVLL). Residues 45–417 (RSDQEPLYPV…SEASGMVTQL (373 aa)) lie on the Extracellular side of the membrane. The SRCR domain occupies 54–151 (VQVSSADARL…RGRFLATICQ (98 aa)). 8 disulfides stabilise this stretch: Cys77/Cys140, Cys90/Cys150, Cys119/Cys138, Cys153/Cys277, Cys188/Cys204, Cys291/Cys359, Cys322/Cys338, and Cys349/Cys381. A glycan (N-linked (GlcNAc...) asparagine) is linked at Asn112. The Peptidase S1 domain occupies 163–405 (IVGGRDTSLG…FREWIFQAIK (243 aa)). Active-site charge relay system residues include His203 and Asp257. Ser353 (charge relay system) is an active-site residue.

Belongs to the peptidase S1 family.

It localises to the membrane. The enzyme catalyses Cleavage after basic amino-acid residues, with Arg strongly preferred to Lys.. Functionally, plays an essential role in cell growth and maintenance of cell morphology. May mediate the activating cleavage of HGF and MST1/HGFL. Plays a role in the proteolytic processing of ACE2. The chain is Serine protease hepsin (HPN) from Pongo abelii (Sumatran orangutan).